The primary structure comprises 156 residues: ATP synthase subunit b (156 aa).

The chain crosses the membrane as a helical span at residues 7-29 (LLGQAISFALFVWFCMKYVWPPL).

The protein belongs to the ATPase B chain family. F-type ATPases have 2 components, F(1) - the catalytic core - and F(0) - the membrane proton channel. F(1) has five subunits: alpha(3), beta(3), gamma(1), delta(1), epsilon(1). F(0) has three main subunits: a(1), b(2) and c(10-14). The alpha and beta chains form an alternating ring which encloses part of the gamma chain. F(1) is attached to F(0) by a central stalk formed by the gamma and epsilon chains, while a peripheral stalk is formed by the delta and b chains.

It is found in the cell inner membrane. Functionally, f(1)F(0) ATP synthase produces ATP from ADP in the presence of a proton or sodium gradient. F-type ATPases consist of two structural domains, F(1) containing the extramembraneous catalytic core and F(0) containing the membrane proton channel, linked together by a central stalk and a peripheral stalk. During catalysis, ATP synthesis in the catalytic domain of F(1) is coupled via a rotary mechanism of the central stalk subunits to proton translocation. Its function is as follows. Component of the F(0) channel, it forms part of the peripheral stalk, linking F(1) to F(0). This chain is ATP synthase subunit b, found in Vibrio alginolyticus.